Here is a 104-residue protein sequence, read N- to C-terminus: Phosphoribosyl-ATP pyrophosphatase (104 aa).

It belongs to the PRA-PH family.

It localises to the cytoplasm. It catalyses the reaction 1-(5-phospho-beta-D-ribosyl)-ATP + H2O = 1-(5-phospho-beta-D-ribosyl)-5'-AMP + diphosphate + H(+). The protein operates within amino-acid biosynthesis; L-histidine biosynthesis; L-histidine from 5-phospho-alpha-D-ribose 1-diphosphate: step 2/9. This is Phosphoribosyl-ATP pyrophosphatase from Streptococcus sanguinis (strain SK36).